Here is a 279-residue protein sequence, read N- to C-terminus: Tryptophan 2,3-dioxygenase (279 aa).

Substrate is bound by residues 48–52 (FIVIH), Y110, and R114. H237 is a binding site for heme. T251 serves as a coordination point for substrate.

It belongs to the tryptophan 2,3-dioxygenase family. In terms of assembly, homotetramer. Requires heme as cofactor.

The enzyme catalyses L-tryptophan + O2 = N-formyl-L-kynurenine. The protein operates within amino-acid degradation; L-tryptophan degradation via kynurenine pathway; L-kynurenine from L-tryptophan: step 1/2. In terms of biological role, heme-dependent dioxygenase that catalyzes the oxidative cleavage of the L-tryptophan (L-Trp) pyrrole ring and converts L-tryptophan to N-formyl-L-kynurenine. Catalyzes the oxidative cleavage of the indole moiety. The polypeptide is Tryptophan 2,3-dioxygenase (Bacillus cereus (strain ATCC 10987 / NRS 248)).